A 522-amino-acid polypeptide reads, in one-letter code: GMP synthase [glutamine-hydrolyzing] (522 aa).

In terms of domain architecture, Glutamine amidotransferase type-1 spans 9 to 204; it reads KILILDFGAQ…VVDICGCQTL (196 aa). Cysteine 86 serves as the catalytic Nucleophile. Catalysis depends on residues histidine 178 and glutamate 180. The GMPS ATP-PPase domain occupies 205–397; sequence WTAANIIEDQ…LGLPHAMVYR (193 aa). ATP is bound at residue 232 to 238; the sequence is SGGVDSS.

In terms of assembly, homodimer.

The catalysed reaction is XMP + L-glutamine + ATP + H2O = GMP + L-glutamate + AMP + diphosphate + 2 H(+). It functions in the pathway purine metabolism; GMP biosynthesis; GMP from XMP (L-Gln route): step 1/1. Its function is as follows. Catalyzes the synthesis of GMP from XMP. This is GMP synthase [glutamine-hydrolyzing] from Xylella fastidiosa (strain M12).